The chain runs to 214 residues: Rac-like GTP-binding protein 1 (214 aa).

Residues 17–24 (GDGAVGKT), 20–25 (AVGKTC), T42, 64–68 (DTAGQ), G67, 122–125 (TKLD), 123–125 (KLD), and 164–165 (SK) each bind GTP. The Effector region motif lies at 39 to 47 (YIPTVFDNF).

Belongs to the small GTPase superfamily. Rho family. In terms of assembly, may interact with MPK1/MAPK6. Binds to RBOHB, preferentially in the GTP-bound form. Interacts with CCR1 in a GTP-dependent manner. Post-translationally, may be palmitoylated.

The protein localises to the cytoplasm. The protein resides in the membrane. Functionally, small GTPase playing a general role in disease resistance signaling pathway. Acts downstream of heterotrimeric G protein alpha subunit. Regulates cell death and reactive oxygen species production, probably through NADPH oxidase. Also involved in sphingolipid elicitor (SE)-dependent defense signaling. Activates phytoalexin production and alters defense-related genes. Down-regulates metallothionein 2b, a reactive oxygen scavenger. May control lignin synthesis through regulation of both NADPH oxidase and CCR1 activities during defense responses. Stimulates lignin synthesis in suspension cell culture. In Oryza sativa subsp. japonica (Rice), this protein is Rac-like GTP-binding protein 1 (RAC1).